Reading from the N-terminus, the 682-residue chain is E3 ubiquitin-protein ligase RNF103 (682 aa).

The next 4 membrane-spanning stretches (helical) occupy residues 6–26 (FFLL…EAIV), 326–346 (LFVL…FITQ), 366–386 (LLII…LDSF), and 411–431 (MFYS…GLLI). Acidic residues predominate over residues 525–542 (EEMSESSQDTENDSDSDN). The tract at residues 525 to 549 (EEMSESSQDTENDSDSDNTDTFSSS) is disordered. Residues 618-660 (CVVCLENFENGCLLMGLPCGHVFHQNCIVMWLAGGRHCCPVCR) form an RING-type zinc finger.

As to quaternary structure, interacts with DERL1 and VCP. As to expression, expressed in different tissues including hippocampus, cerebral cortex, heart, kidney, spleen and lung. Expression is increased in hippocampus and frontal cortex after chronic treatment with antidepressants.

The protein localises to the endoplasmic reticulum membrane. The enzyme catalyses S-ubiquitinyl-[E2 ubiquitin-conjugating enzyme]-L-cysteine + [acceptor protein]-L-lysine = [E2 ubiquitin-conjugating enzyme]-L-cysteine + N(6)-ubiquitinyl-[acceptor protein]-L-lysine.. It participates in protein modification; protein ubiquitination. Its function is as follows. Acts as an E2-dependent E3 ubiquitin-protein ligase, probably involved in the ER-associated protein degradation pathway. This chain is E3 ubiquitin-protein ligase RNF103 (Rnf103), found in Rattus norvegicus (Rat).